The following is a 372-amino-acid chain: NAD(P)H-quinone oxidoreductase subunit 1 (372 aa).

The next 8 membrane-spanning stretches (helical) occupy residues 27-47 (VLWM…GVLV), 97-117 (FLFT…YLIV), 128-148 (VGAG…GLLM), 176-196 (LALA…IDIV), 204-224 (ILGW…IAAL), 254-274 (FALF…LVSI), 308-328 (ALGI…AILL), and 347-367 (FLLP…LTFP).

Belongs to the complex I subunit 1 family. In terms of assembly, NDH-1 is composed of at least 11 different subunits.

It is found in the cellular thylakoid membrane. The catalysed reaction is a plastoquinone + NADH + (n+1) H(+)(in) = a plastoquinol + NAD(+) + n H(+)(out). The enzyme catalyses a plastoquinone + NADPH + (n+1) H(+)(in) = a plastoquinol + NADP(+) + n H(+)(out). Functionally, NDH-1 shuttles electrons from an unknown electron donor, via FMN and iron-sulfur (Fe-S) centers, to quinones in the respiratory and/or the photosynthetic chain. The immediate electron acceptor for the enzyme in this species is believed to be plastoquinone. Couples the redox reaction to proton translocation, and thus conserves the redox energy in a proton gradient. In Synechococcus elongatus (strain ATCC 33912 / PCC 7942 / FACHB-805) (Anacystis nidulans R2), this protein is NAD(P)H-quinone oxidoreductase subunit 1.